A 173-amino-acid polypeptide reads, in one-letter code: T-cell surface glycoprotein CD3 delta chain (173 aa).

Positions 1 to 21 (MEHSGILASLILIAVLPQGSP) are cleaved as a signal peptide. Residues 22–105 (FKIQVTEYED…CVELDSGTMA (84 aa)) lie on the Extracellular side of the membrane. Cysteine 37 and cysteine 73 are disulfide-bonded. Asparagine 38, asparagine 55, and asparagine 74 each carry an N-linked (GlcNAc...) asparagine glycan. A helical membrane pass occupies residues 106-126 (GVIFIDLIATLLLALGVYCFA). The Cytoplasmic segment spans residues 127 to 173 (GHETGRPSGAAEVQALLKNEQLYQPLRDREDTQYSRLGGNWPRNKKS). The ITAM domain occupies 138–166 (EVQALLKNEQLYQPLRDREDTQYSRLGGN). Tyrosine 149 and tyrosine 160 each carry phosphotyrosine.

In terms of assembly, the TCR-CD3 complex is composed of a CD3D/CD3E and a CD3G/CD3E heterodimers that preferentially associate with TCRalpha and TCRbeta, respectively, to form TCRalpha/CD3E/CD3G and TCRbeta/CD3G/CD3E trimers. In turn, the hexamer interacts with CD3Z homodimer to form the TCR-CD3 complex. Alternatively, TCRalpha and TCRbeta can be replaced by TCRgamma and TCRdelta. Interacts with coreceptors CD4 and CD8. Post-translationally, phosphorylated on Tyr residues after T-cell receptor triggering by LCK in association with CD4/CD8.

The protein resides in the membrane. Part of the TCR-CD3 complex present on T-lymphocyte cell surface that plays an essential role in adaptive immune response. When antigen presenting cells (APCs) activate T-cell receptor (TCR), TCR-mediated signals are transmitted across the cell membrane by the CD3 chains CD3D, CD3E, CD3G and CD3Z. All CD3 chains contain immunoreceptor tyrosine-based activation motifs (ITAMs) in their cytoplasmic domain. Upon TCR engagement, these motifs become phosphorylated by Src family protein tyrosine kinases LCK and FYN, resulting in the activation of downstream signaling pathways. In addition of this role of signal transduction in T-cell activation, CD3D plays an essential role in thymocyte differentiation. Indeed, participates in correct intracellular TCR-CD3 complex assembly and surface expression. In absence of a functional TCR-CD3 complex, thymocytes are unable to differentiate properly. Interacts with CD4 and CD8 and thus serves to establish a functional link between the TCR and coreceptors CD4 and CD8, which is needed for activation and positive selection of CD4 or CD8 T-cells. In Mus musculus (Mouse), this protein is T-cell surface glycoprotein CD3 delta chain (Cd3d).